The primary structure comprises 100 residues: UPF0213 protein CKO_04549 (100 aa).

The GIY-YIG domain maps to 2–77; the sequence is TPWYLYLIRT…KRLTKRQKER (76 aa).

The protein belongs to the UPF0213 family.

In Citrobacter koseri (strain ATCC BAA-895 / CDC 4225-83 / SGSC4696), this protein is UPF0213 protein CKO_04549.